Here is a 378-residue protein sequence, read N- to C-terminus: Erythronate-4-phosphate dehydrogenase (378 aa).

The substrate site is built by S45 and T66. NAD(+) is bound by residues D146 and T175. R208 is a catalytic residue. D232 provides a ligand contact to NAD(+). E237 is an active-site residue. H254 functions as the Proton donor in the catalytic mechanism. G257 is a binding site for NAD(+). A substrate-binding site is contributed by Y258.

This sequence belongs to the D-isomer specific 2-hydroxyacid dehydrogenase family. PdxB subfamily. Homodimer.

It localises to the cytoplasm. The enzyme catalyses 4-phospho-D-erythronate + NAD(+) = (R)-3-hydroxy-2-oxo-4-phosphooxybutanoate + NADH + H(+). It participates in cofactor biosynthesis; pyridoxine 5'-phosphate biosynthesis; pyridoxine 5'-phosphate from D-erythrose 4-phosphate: step 2/5. Functionally, catalyzes the oxidation of erythronate-4-phosphate to 3-hydroxy-2-oxo-4-phosphonooxybutanoate. This chain is Erythronate-4-phosphate dehydrogenase, found in Salmonella arizonae (strain ATCC BAA-731 / CDC346-86 / RSK2980).